Here is a 346-residue protein sequence, read N- to C-terminus: Peroxidase 37 (346 aa).

The signal sequence occupies residues M1–A22. Q23 is subject to Pyrrolidone carboxylic acid. Cystine bridges form between C33–C113, C66–C71, C119–C323, and C199–C231. The active-site Proton acceptor is H64. Ca(2+) is bound by residues D65, V68, G70, D72, and S74. N-linked (GlcNAc...) asparagine glycosylation is present at N79. Position 161 (P161) interacts with substrate. H192 contacts heme b. Residue T193 participates in Ca(2+) binding. N-linked (GlcNAc...) asparagine glycans are attached at residues N208 and N236. Positions 244, 247, and 252 each coordinate Ca(2+).

The protein belongs to the peroxidase family. Classical plant (class III) peroxidase subfamily. Heme b is required as a cofactor. The cofactor is Ca(2+).

Its subcellular location is the secreted. The protein resides in the vacuole. It carries out the reaction 2 a phenolic donor + H2O2 = 2 a phenolic radical donor + 2 H2O. Removal of H(2)O(2), oxidation of toxic reductants, biosynthesis and degradation of lignin, suberization, auxin catabolism, response to environmental stresses such as wounding, pathogen attack and oxidative stress. These functions might be dependent on each isozyme/isoform in each plant tissue. The chain is Peroxidase 37 (PER37) from Arabidopsis thaliana (Mouse-ear cress).